Reading from the N-terminus, the 312-residue chain is Bifunctional pinoresinol-lariciresinol reductase (312 aa).

Residues 10-16 (GGTGYIG), Arg35, and Lys44 each bind NADP(+). Lys136 acts as the Proton acceptor in catalysis. Arg140 contacts NADP(+). Residue His268 participates in substrate binding.

This sequence belongs to the NmrA-type oxidoreductase family. Isoflavone reductase subfamily. In terms of assembly, dimer. Expressed in seed coats, but not in embryos, leaves, stems and roots.

Its function is as follows. Reductase involved in lignan biosynthesis. Catalyzes the sequential conversion of pinoresinol into lariciresinol and of lariciresinol into secoisolariciresinol. Abstracts the 4R-hydride from the NADPH cofactor during catalysis. This Linum usitatissimum (Flax) protein is Bifunctional pinoresinol-lariciresinol reductase.